The primary structure comprises 52 residues: MLHYAMIFFVIAIIAAVLGFSGIAGAATNIAWILFVVFLILAVISMFRRGKV.

The next 2 membrane-spanning stretches (helical) occupy residues 5-25 and 27-47; these read AMIF…GIAG and ATNI…ISMF.

The protein belongs to the UPF0391 family.

The protein resides in the cell membrane. This chain is UPF0391 membrane protein XOO4217, found in Xanthomonas oryzae pv. oryzae (strain KACC10331 / KXO85).